The following is a 525-amino-acid chain: GMP synthase [glutamine-hydrolyzing] (525 aa).

A Glutamine amidotransferase type-1 domain is found at 9–207; sequence RILILDFGSQ…VRDICQCEAL (199 aa). Cysteine 86 (nucleophile) is an active-site residue. Active-site residues include histidine 181 and glutamate 183. The GMPS ATP-PPase domain maps to 208-400; the sequence is WTPAKIIDDA…LGLPYDMLYR (193 aa). Residue 235 to 241 coordinates ATP; that stretch reads SGGVDSS.

As to quaternary structure, homodimer.

It catalyses the reaction XMP + L-glutamine + ATP + H2O = GMP + L-glutamate + AMP + diphosphate + 2 H(+). It participates in purine metabolism; GMP biosynthesis; GMP from XMP (L-Gln route): step 1/1. In terms of biological role, catalyzes the synthesis of GMP from XMP. This Salmonella arizonae (strain ATCC BAA-731 / CDC346-86 / RSK2980) protein is GMP synthase [glutamine-hydrolyzing].